The chain runs to 409 residues: Dipeptidase 1 (409 aa).

The first 16 residues, 1-16, serve as a signal peptide directing secretion; sequence MWTSWWLWPLVAVCAA. Histidine 36 and aspartate 38 together coordinate Zn(2+). A glycan (N-linked (GlcNAc...) asparagine) is linked at asparagine 57. Cysteines 87 and 170 form a disulfide. A Zn(2+)-binding site is contributed by glutamate 141. Histidine 168 contacts substrate. 2 residues coordinate Zn(2+): histidine 214 and histidine 235. Cysteine 242 and cysteine 274 are oxidised to a cystine. A substrate-binding site is contributed by arginine 246. An N-linked (GlcNAc...) asparagine glycan is attached at asparagine 279. Aspartate 304 serves as a coordination point for substrate. Serine 384 carries GPI-anchor amidated serine lipidation. Positions 385 to 409 are cleaved as a propeptide — removed in mature form; sequence AAPSLHLPPGSLLASLVPLLLLSLP.

Belongs to the metallo-dependent hydrolases superfamily. Peptidase M19 family. In terms of assembly, homodimer; disulfide-linked. Zn(2+) serves as cofactor.

It is found in the apical cell membrane. The protein localises to the cell projection. The protein resides in the microvillus membrane. Its subcellular location is the cell membrane. It catalyses the reaction an L-aminoacyl-L-amino acid + H2O = 2 an L-alpha-amino acid. It carries out the reaction leukotriene D4 + H2O = leukotriene E4 + glycine. The catalysed reaction is L-cystine-bis-glycine + 2 H2O = L-cystine + 2 glycine. The enzyme catalyses a beta-lactam + H2O = a substituted beta-amino acid. It catalyses the reaction glycyldehydrophenylalanine + H2O = 2,3-didehydrophenylalanine + glycine. Inhibited by L-penicillamine. Inhibited by cilastatin. Its function is as follows. Hydrolyzes a wide range of dipeptides. Hydrolyzes the conversion of leukotriene D4 to leukotriene E4. Hydrolyzes cystinyl-bis-glycine (cys-bis-gly) formed during glutathione degradation. Also possesses beta lactamase activity and hydrolytically inactivates beta-lactam antibiotics. In terms of biological role, independently of its dipeptidase activity, acts as an adhesion receptor for neutrophil recruitment from bloodstream into inflamed lungs and liver. In Sus scrofa (Pig), this protein is Dipeptidase 1 (DPEP1).